We begin with the raw amino-acid sequence, 823 residues long: Trimethylamine-N-oxide reductase (823 aa).

Positions 1-32 (MKQSRRQFLKNMSAMAATFAMPNFLIAQNAFA) form a signal peptide, tat-type signal. Serine 181 serves as a coordination point for Mo-bis(molybdopterin guanine dinucleotide).

Belongs to the prokaryotic molybdopterin-containing oxidoreductase family. Mo-bis(molybdopterin guanine dinucleotide) serves as cofactor. Predicted to be exported by the Tat system. The position of the signal peptide cleavage has not been experimentally proven.

It localises to the periplasm. The catalysed reaction is trimethylamine + 2 Fe(III)-[cytochrome c] + H2O = trimethylamine N-oxide + 2 Fe(II)-[cytochrome c] + 3 H(+). Its function is as follows. Reduces trimethylamine-N-oxide (TMAO) into trimethylamine; an anaerobic reaction coupled to energy-yielding reactions. This chain is Trimethylamine-N-oxide reductase (torA), found in Pasteurella multocida (strain Pm70).